Consider the following 286-residue polypeptide: Protease HtpX homolog (286 aa).

2 helical membrane passes run 7–27 and 29–49; these read TFMLMAAITALFIVIGGMIGG and SGMMLALLFALGMNFFSYWFS. Histidine 131 provides a ligand contact to Zn(2+). Residue glutamate 132 is part of the active site. Histidine 135 contributes to the Zn(2+) binding site. The next 2 helical transmembrane spans lie at 146 to 166 and 177 to 197; these read LSATMAGAISALANFAVFFGG and IAGIAVAILAPLAASLIQMAI. Glutamate 202 lines the Zn(2+) pocket.

Belongs to the peptidase M48B family. It depends on Zn(2+) as a cofactor.

The protein localises to the cell inner membrane. In Ralstonia nicotianae (strain ATCC BAA-1114 / GMI1000) (Ralstonia solanacearum), this protein is Protease HtpX homolog.